The chain runs to 274 residues: NH(3)-dependent NAD(+) synthetase (274 aa).

46–53 provides a ligand contact to ATP; sequence GISGGQDS. Residue aspartate 52 coordinates Mg(2+). Deamido-NAD(+) is bound at residue arginine 140. Threonine 160 is a binding site for ATP. Glutamate 165 contacts Mg(2+). Residues lysine 173 and aspartate 180 each contribute to the deamido-NAD(+) site. ATP is bound by residues lysine 189 and threonine 211. 260 to 261 contacts deamido-NAD(+); that stretch reads HK.

The protein belongs to the NAD synthetase family. Homodimer.

It carries out the reaction deamido-NAD(+) + NH4(+) + ATP = AMP + diphosphate + NAD(+) + H(+). It participates in cofactor biosynthesis; NAD(+) biosynthesis; NAD(+) from deamido-NAD(+) (ammonia route): step 1/1. Its function is as follows. Catalyzes the ATP-dependent amidation of deamido-NAD to form NAD. Uses ammonia as a nitrogen source. The chain is NH(3)-dependent NAD(+) synthetase from Streptococcus pyogenes serotype M6 (strain ATCC BAA-946 / MGAS10394).